Consider the following 382-residue polypeptide: uncharacterized protein (382 aa).

The next 12 helical transmembrane spans lie at 14–34 (GLLLLTLAIAVLNTLVPLWLA), 45–65 (MVSSSYFTGNLVGTLFTGYLI), 75–95 (YLASLIFAAGCVGLGVMVGFW), 102–122 (FIAGIGCAMIWVVVESALMCS), 131–151 (LLAAYMMVYYVGTFLGQLLVS), 157–177 (LLHVLPWVTGMILAGILPLLF), 204–224 (LGVNGCIISGIVLGSLYGLMP), 235–255 (ASIGFWMAVLVSAGILGQWPV), 265–284 (LLVLRVQVFVVILGSIVMLT), 289–311 (APALFILGAAGFTLYPVAMAWAC), 325–345 (ALLLSYTVGSLLGPSFTAMLM), and 349–369 (SDNLLFLMIASVSFIYLLMLL).

This sequence belongs to the major facilitator superfamily. YcaD (TC 2.A.1.26) family.

The protein resides in the cell inner membrane. This is an uncharacterized protein from Salmonella arizonae (strain ATCC BAA-731 / CDC346-86 / RSK2980).